We begin with the raw amino-acid sequence, 477 residues long: ATP-dependent rRNA helicase RRP3 (477 aa).

Residues 1-22 (MSVKVDGMINKKSKTHSKKLDA) are disordered. The Q motif signature appears at 65 to 93 (KSFNELKLIPELLEAIQQMKFTKPTPIQS). Residues 96 to 267 (IPHALEGKDI…RASLHNPVRV (172 aa)) enclose the Helicase ATP-binding domain. 109-116 (AQTGSGKT) lines the ATP pocket. Residues 215 to 218 (DEAD) carry the DEAD box motif. The region spanning 294–438 (YLIHLLNEFL…KDPSPSKAVL (145 aa)) is the Helicase C-terminal domain. The tract at residues 452 to 477 (AIRQTKDFHEKRNPKKNRDDRDREER) is disordered.

Belongs to the DEAD box helicase family. DDX47/RRP3 subfamily. In terms of assembly, interacts with the SSU processome.

Its subcellular location is the nucleus. It catalyses the reaction ATP + H2O = ADP + phosphate + H(+). In terms of biological role, ATP-dependent rRNA helicase required for pre-ribosomal RNA processing. Involved in the maturation of the 35S-pre-rRNA and to its cleavage to mature 18S rRNA. The chain is ATP-dependent rRNA helicase RRP3 from Debaryomyces hansenii (strain ATCC 36239 / CBS 767 / BCRC 21394 / JCM 1990 / NBRC 0083 / IGC 2968) (Yeast).